The sequence spans 419 residues: uncharacterized protein (419 aa).

This sequence belongs to the MT-A70-like family.

The protein resides in the cytoplasm. This is an uncharacterized protein from Schizosaccharomyces pombe (strain 972 / ATCC 24843) (Fission yeast).